Here is a 248-residue protein sequence, read N- to C-terminus: MGVQFPALKTMVTVFLLLMGNMSPVVMKSSIPLRKVKMVASKVVTPGSSLYGVALKDLADTSYNITCTLQVENWIRYRLIVPSVQMVYGVVTTTPIAIEPAKREAFAVRKTSDTASGVAGSVSWELEKARRRFVIMWSVPDNFNSFGYWMGLGMTREGLVDPDKDWYGQMYSGSSDGDLTFTRKDFSYNTDSIIYSNDKFEVEGDMTNTQHAQIKIVIRPSSNNWKDLAPKIRRKLKKKPKPARQRDN.

An N-terminal signal peptide occupies residues 1–23 (MGVQFPALKTMVTVFLLLMGNMS). Positions 45-64 (TPGSSLYGVALKDLADTSYN) are N-terminal region. Residues glycine 120, serine 138, proline 140, tyrosine 167, and tyrosine 171 each coordinate phosphocholine.

It belongs to the actinoporin family. Conoidea subfamily. Octamer or nonamer in membranes. Monomer in the soluble state. 9 isoforms are detected in the injectable venom, mainly corresponding to different oxidative states. In terms of tissue distribution, expressed by the venom duct.

It is found in the secreted. The protein resides in the nematocyst. It localises to the target cell membrane. Functionally, pore-forming protein that forms pores of around 1 nm and causes cardiac stimulation and cytolysis. The polypeptide is Conoporin-Cn1 (Conus consors (Singed cone)).